A 414-amino-acid chain; its full sequence is Tyrosine--tRNA ligase (414 aa).

Y35 lines the L-tyrosine pocket. Positions 40–49 (PTADSLHVGH) match the 'HIGH' region motif. Residues Y164 and Q168 each contribute to the L-tyrosine site. Positions 226–230 (KFGKT) match the 'KMSKS' region motif. An ATP-binding site is contributed by K229. In terms of domain architecture, S4 RNA-binding spans 347 to 414 (TKVIDALIEV…KKKYFVILIK (68 aa)).

It belongs to the class-I aminoacyl-tRNA synthetase family. TyrS type 1 subfamily. Homodimer.

It is found in the cytoplasm. The catalysed reaction is tRNA(Tyr) + L-tyrosine + ATP = L-tyrosyl-tRNA(Tyr) + AMP + diphosphate + H(+). Its function is as follows. Catalyzes the attachment of tyrosine to tRNA(Tyr) in a two-step reaction: tyrosine is first activated by ATP to form Tyr-AMP and then transferred to the acceptor end of tRNA(Tyr). This is Tyrosine--tRNA ligase from Mycoplasma mycoides subsp. mycoides SC (strain CCUG 32753 / NCTC 10114 / PG1).